Here is a 172-residue protein sequence, read N- to C-terminus: Acetolactate synthase small subunit (172 aa).

In terms of domain architecture, ACT spans 4 to 78 (TLSVLVEDEA…NILKVDNITE (75 aa)).

This sequence belongs to the acetolactate synthase small subunit family. As to quaternary structure, dimer of large and small chains.

The protein localises to the plastid. It localises to the chloroplast. It carries out the reaction 2 pyruvate + H(+) = (2S)-2-acetolactate + CO2. It functions in the pathway amino-acid biosynthesis; L-isoleucine biosynthesis; L-isoleucine from 2-oxobutanoate: step 1/4. The protein operates within amino-acid biosynthesis; L-valine biosynthesis; L-valine from pyruvate: step 1/4. This is Acetolactate synthase small subunit (ilvH) from Cyanidium caldarium (Red alga).